Consider the following 29-residue polypeptide: Cytochrome b6-f complex subunit 8 (29 aa).

The chain crosses the membrane as a helical span at residues 3–23 (IVSLAWAGLMVVFTFSLSLVV).

The protein belongs to the PetN family. As to quaternary structure, the 4 large subunits of the cytochrome b6-f complex are cytochrome b6, subunit IV (17 kDa polypeptide, PetD), cytochrome f and the Rieske protein, while the 4 small subunits are PetG, PetL, PetM and PetN. The complex functions as a dimer.

The protein resides in the plastid. The protein localises to the chloroplast thylakoid membrane. In terms of biological role, component of the cytochrome b6-f complex, which mediates electron transfer between photosystem II (PSII) and photosystem I (PSI), cyclic electron flow around PSI, and state transitions. The chain is Cytochrome b6-f complex subunit 8 from Arabis hirsuta (Hairy rock-cress).